We begin with the raw amino-acid sequence, 61 residues long: uncharacterized protein (61 aa).

It is found in the mitochondrion. This is an uncharacterized protein from Marchantia polymorpha (Common liverwort).